The following is a 249-amino-acid chain: DNA polymerase sliding clamp (249 aa).

The protein belongs to the PCNA family. As to quaternary structure, homotrimer. The subunits circularize to form a toroid; DNA passes through its center. Replication factor C (RFC) is required to load the toroid on the DNA.

In terms of biological role, sliding clamp subunit that acts as a moving platform for DNA processing. Responsible for tethering the catalytic subunit of DNA polymerase and other proteins to DNA during high-speed replication. In Thermococcus sibiricus (strain DSM 12597 / MM 739), this protein is DNA polymerase sliding clamp.